A 145-amino-acid chain; its full sequence is Nucleoside diphosphate kinase (145 aa).

6 residues coordinate ATP: Lys11, Phe59, Arg87, Thr93, Arg104, and Asn114. The active-site Pros-phosphohistidine intermediate is His117.

It belongs to the NDK family. Mg(2+) is required as a cofactor.

It localises to the cytoplasm. The enzyme catalyses a 2'-deoxyribonucleoside 5'-diphosphate + ATP = a 2'-deoxyribonucleoside 5'-triphosphate + ADP. It catalyses the reaction a ribonucleoside 5'-diphosphate + ATP = a ribonucleoside 5'-triphosphate + ADP. Functionally, major role in the synthesis of nucleoside triphosphates other than ATP. The ATP gamma phosphate is transferred to the NDP beta phosphate via a ping-pong mechanism, using a phosphorylated active-site intermediate. This is Nucleoside diphosphate kinase from Sulfolobus acidocaldarius (strain ATCC 33909 / DSM 639 / JCM 8929 / NBRC 15157 / NCIMB 11770).